The following is a 249-amino-acid chain: Cobalt-precorrin-6A reductase (249 aa).

This sequence belongs to the precorrin-6x reductase family.

The catalysed reaction is Co-precorrin-6B + NAD(+) = Co-precorrin-6A + NADH + H(+). Its pathway is cofactor biosynthesis; adenosylcobalamin biosynthesis; cob(II)yrinate a,c-diamide from sirohydrochlorin (anaerobic route): step 7/10. Functionally, catalyzes the reduction of the macrocycle of cobalt-precorrin-6A to cobalt-precorrin-6B. The protein is Cobalt-precorrin-6A reductase (cbiJ) of Methanocaldococcus jannaschii (strain ATCC 43067 / DSM 2661 / JAL-1 / JCM 10045 / NBRC 100440) (Methanococcus jannaschii).